A 97-amino-acid polypeptide reads, in one-letter code: Non-pathogenic pore-forming peptide amoebapore A (97 aa).

An N-terminal signal peptide occupies residues 1–20; sequence MKAIVFVLIFAVAFAVTLRQ. One can recognise a Saposin B-type domain in the interval 21–97; the sequence is GPIVCNLCTG…NAICAKIHAC (77 aa). Cystine bridges form between Cys25/Cys97, Cys28/Cys91, and Cys55/Cys66.

Monomer. Homodimer. Hexamer; formed during insertion in the membrane.

The protein resides in the cytoplasmic granule. Forms pores in the cell membrane of host cells. Implicated in the cytolytic activity of the parasite. Pore forming activity is lower compared to the activity of ameobapore A from the pathogenic strain HM-1:IMSS. In Entamoeba histolytica, this protein is Non-pathogenic pore-forming peptide amoebapore A.